The chain runs to 426 residues: Histidine--tRNA ligase (426 aa).

Belongs to the class-II aminoacyl-tRNA synthetase family. In terms of assembly, homodimer.

Its subcellular location is the cytoplasm. It catalyses the reaction tRNA(His) + L-histidine + ATP = L-histidyl-tRNA(His) + AMP + diphosphate + H(+). The polypeptide is Histidine--tRNA ligase (Corynebacterium kroppenstedtii (strain DSM 44385 / JCM 11950 / CIP 105744 / CCUG 35717)).